The following is a 105-amino-acid chain: Thioredoxin (105 aa).

The 104-residue stretch at 2–105 (VKIVGDLTEF…KLEEAIKKYM (104 aa)) folds into the Thioredoxin domain. Active-site nucleophile residues include C32 and C35. C32 and C35 are oxidised to a cystine. 2 positions are modified to S-nitrosocysteine: C69 and C73.

The protein belongs to the thioredoxin family. In terms of processing, may be nitrosylated on several cysteine residues, depending on the oxidation state. Nitrosylated Cys-73 may serve as donor for nitrosylation of target proteins.

Its subcellular location is the nucleus. It is found in the cytoplasm. The protein localises to the secreted. Functionally, participates in various redox reactions through the reversible oxidation of its active center dithiol to a disulfide and catalyzes dithiol-disulfide exchange reactions. Plays a role in the reversible S-nitrosylation of cysteine residues in target proteins, and thereby contributes to the response to intracellular nitric oxide. Nitrosylates the active site Cys of CASP3 in response to nitric oxide (NO), and thereby inhibits caspase-3 activity. Induces the FOS/JUN AP-1 DNA binding activity in ionizing radiation (IR) cells through its oxidation/reduction status and stimulates AP-1 transcriptional activity. The polypeptide is Thioredoxin (TXN) (Ophiophagus hannah (King cobra)).